The following is a 218-amino-acid chain: Response regulator UvrY (218 aa).

A Response regulatory domain is found at 3-119 (NVLLVDDHEL…EVVSAIRSVY (117 aa)). Asp-54 carries the post-translational modification 4-aspartylphosphate. The 66-residue stretch at 143 to 208 (TESPFASLSE…ELTHLAIRHG (66 aa)) folds into the HTH luxR-type domain. The segment at residues 167 to 186 (VNEISEQLNLSPKTVNSYRY) is a DNA-binding region (H-T-H motif).

Post-translationally, phosphorylated and activated by BarA.

The protein resides in the cytoplasm. Member of the two-component regulatory system UvrY/BarA involved in the regulation of carbon metabolism via the CsrA/CsrB regulatory system. UvrY activates the transcription of the untranslated csrB RNA and of barA, in an autoregulatory loop. Mediates the effects of CsrA on csrB RNA by BarA-dependent and BarA-independent mechanisms. The polypeptide is Response regulator UvrY (uvrY) (Escherichia coli (strain K12)).